The chain runs to 630 residues: Golgin subfamily A member 8K (630 aa).

Positions 1 to 76 (MAEETQHNKL…TSSATLKDLE (76 aa)) are disordered. 2 coiled-coil regions span residues 86 to 148 (LDSR…LNTD) and 224 to 411 (LTQL…QQNQ). The segment covering 352-362 (KQEERIQEQHK) has biased composition (basic and acidic residues). Disordered stretches follow at residues 352–379 (KQEE…EPNN) and 424–444 (GEGH…PMPS).

Belongs to the GOLGA8 family.

This is Golgin subfamily A member 8K from Homo sapiens (Human).